The sequence spans 225 residues: Elongation factor 1-beta (225 aa).

Positions 2 to 84 (GFGDLKSPAG…ALGKYGPADV (83 aa)) constitute a GST C-terminal domain. N6-acetyllysine is present on K7. S8 and S42 each carry phosphoserine. The interval 78–115 (KYGPADVEDTTGSGATDSKDDDDIDLFGSDDEEESEEA) is disordered. Phosphothreonine is present on residues T88 and T93. Phosphoserine occurs at positions 95 and 106. Residues 96–113 (KDDDDIDLFGSDDEEESE) are compositionally biased toward acidic residues. K147 is covalently cross-linked (Glycyl lysine isopeptide (Lys-Gly) (interchain with G-Cter in SUMO2)). S174 bears the Phosphoserine mark.

This sequence belongs to the EF-1-beta/EF-1-delta family. EF-1 is composed of 4 subunits: alpha, beta (alpha subunit of the eEF1B subcomplex), delta (beta subunit of the eEF1B subcomplex), and gamma (gamma subunit of the eEF1B subcomplex). Interacts with elongation factor EEF1A1. Post-translationally, phosphorylation affects the GDP/GTP exchange rate.

In terms of biological role, catalytic subunit of the guanine nucleotide exchange factor (GEF) (eEF1B subcomplex) of the eukaryotic elongation factor 1 complex (eEF1). Stimulates the exchange of GDP for GTP on elongation factor 1A (eEF1A), probably by displacing GDP from the nucleotide binding pocket in eEF1A. The polypeptide is Elongation factor 1-beta (EEF1B2) (Homo sapiens (Human)).